Consider the following 517-residue polypeptide: Fluconazole resistance protein 1 (517 aa).

The segment at residues 26–52 is a DNA-binding region (zn(2)-C6 fungal-type); sequence CDSCRIKKTKCDGKKPCNRCTLDNKIC. 4 disordered regions span residues 106-137, 250-270, 284-307, and 378-403; these read KSVDQEKSSPASSTPNSSSSDHHDDVEEQNST, SAQFSKGTFSPQQQQLQQQQQ, SDIESDSSNKEDGLNSGSVSPPTS, and GSIQLQQKPRGSVHKPVRNHSRVSSF. The span at 113–124 shows a compositional bias: low complexity; it reads SSPASSTPNSSS. Residues 250 to 260 are compositionally biased toward polar residues; it reads SAQFSKGTFSP. Low complexity predominate over residues 261–270; it reads QQQQLQQQQQ. A compositionally biased stretch (polar residues) spans 298–307; the sequence is NSGSVSPPTS. Residues 388 to 398 are compositionally biased toward basic residues; that stretch reads GSVHKPVRNHS.

It localises to the nucleus. Its function is as follows. Transcription factor that acts as a negative regulator of fluconazole resistance in C.albicans. Also confers fluconazole resistance in S.cerevisiae by activation of the PDR5 gene. The chain is Fluconazole resistance protein 1 (FCR1) from Candida albicans (Yeast).